The following is a 470-amino-acid chain: Argininosuccinate lyase (470 aa).

This sequence belongs to the lyase 1 family. Argininosuccinate lyase subfamily.

Its subcellular location is the cytoplasm. It carries out the reaction 2-(N(omega)-L-arginino)succinate = fumarate + L-arginine. Its pathway is amino-acid biosynthesis; L-arginine biosynthesis; L-arginine from L-ornithine and carbamoyl phosphate: step 3/3. The chain is Argininosuccinate lyase from Synechococcus sp. (strain WH7803).